Here is a 419-residue protein sequence, read N- to C-terminus: Histone acetyltransferase type B subunit 2 (419 aa).

WD repeat units follow at residues Pro-131–Leu-171, Tyr-177–Lys-217, Ala-225–Asn-265, Asn-267–Tyr-307, and Gly-311–Thr-351. Residues Asp-353 to Asp-357 are interaction with the histone H4 N-terminus. The stretch at Gly-368 to Gly-408 is one WD 6 repeat.

It belongs to the WD repeat RBAP46/RBAP48/MSI1 family. As to quaternary structure, component of the HAT-B complex composed of at least HAT1 and HAT2. The HAT-B complex binds to histone H4 tail.

The protein localises to the cytoplasm. The protein resides in the nucleus. In terms of biological role, regulatory subunit of the histone acetylase B (HAT-B) complex. The complex acetylates Lys-12 of histone H4 which is required for telomeric silencing. The protein is Histone acetyltransferase type B subunit 2 (HAT2) of Candida glabrata (strain ATCC 2001 / BCRC 20586 / JCM 3761 / NBRC 0622 / NRRL Y-65 / CBS 138) (Yeast).